We begin with the raw amino-acid sequence, 418 residues long: uncharacterized protein (418 aa).

Transmembrane regions (helical) follow at residues 51-71 (FVMAVGGIAAIVAQTPIGALV), 79-99 (ALVVAGAVLVTAAAVAMPLFA), 110-130 (VTGIASSVFAPALAAITLGAV), 163-183 (FFGPVVVFWVLAGMALISVLA), 224-244 (VIFGAAVVAFHFANAAMLPLV), 258-278 (ALMSSCIVAAQVVMVPVAYVV), 289-309 (PIFLVGFAVLTARGFLYTLSD), 315-335 (VGVQLLDGIGAGIFGALFPLV), 356-376 (ATGIGAALSNLVAGWIVVVAG), and 379-399 (AAFMSLGALAGAGFLLYLVAM).

It belongs to the major facilitator superfamily.

It localises to the cell membrane. This is an uncharacterized protein from Mycobacterium tuberculosis (strain CDC 1551 / Oshkosh).